Here is a 386-residue protein sequence, read N- to C-terminus: Acyl-lipid omega-3 desaturase (cytochrome b5), endoplasmic reticulum (386 aa).

The interval 1–30 (MVVAMDQRTNVNGDPGAGDRKKEERFDPSA) is disordered. The segment covering 17 to 27 (AGDRKKEERFD) has biased composition (basic and acidic residues). The helical transmembrane segment at 63-83 (IIAVAALAIAAVYVDSWFLWP) threads the bilayer. The short motif at 101-105 (HDCGH) is the Histidine box-1 element. The short motif at 137-141 (HRTHH) is the Histidine box-2 element. Helical transmembrane passes span 220–240 (WSIM…LAVL) and 242–262 (VYGV…YLHH). The short motif at 304 to 308 (HVIHH) is the Histidine box-3 element.

This sequence belongs to the fatty acid desaturase type 1 family. In terms of tissue distribution, abundant in leaves and seedlings. Barely detectable in root tissue.

It is found in the endoplasmic reticulum membrane. It carries out the reaction a (9Z,12Z)-octadecadienoyl-containing glycerolipid + 2 Fe(II)-[cytochrome b5] + O2 + 2 H(+) = (9Z,12Z,15Z)-octadecatrienoyl-containing glycerolipid + 2 Fe(III)-[cytochrome b5] + 2 H2O. It functions in the pathway lipid metabolism; polyunsaturated fatty acid biosynthesis. Its function is as follows. Microsomal (ER) omega-3 fatty acid desaturase introduces the third double bond in the biosynthesis of 18:3 fatty acids, important constituents of plant membranes. It is thought to use cytochrome b5 as an electron donor and to act on fatty acids esterified to phosphatidylcholine and, possibly, other phospholipids. The sequence is that of Acyl-lipid omega-3 desaturase (cytochrome b5), endoplasmic reticulum from Arabidopsis thaliana (Mouse-ear cress).